Here is a 201-residue protein sequence, read N- to C-terminus: Large ribosomal subunit protein uL4 (201 aa).

A disordered region spans residues 43 to 69 (TKAQKTRSEVAGGGKKPWRQKGTGRAR).

It belongs to the universal ribosomal protein uL4 family. In terms of assembly, part of the 50S ribosomal subunit.

Its function is as follows. One of the primary rRNA binding proteins, this protein initially binds near the 5'-end of the 23S rRNA. It is important during the early stages of 50S assembly. It makes multiple contacts with different domains of the 23S rRNA in the assembled 50S subunit and ribosome. Forms part of the polypeptide exit tunnel. This Idiomarina loihiensis (strain ATCC BAA-735 / DSM 15497 / L2-TR) protein is Large ribosomal subunit protein uL4.